Consider the following 263-residue polypeptide: 3-methyl-2-oxobutanoate hydroxymethyltransferase (263 aa).

Mg(2+) contacts are provided by aspartate 46 and aspartate 85. Residues 46 to 47 (DS), aspartate 85, and lysine 115 each bind 3-methyl-2-oxobutanoate. Glutamate 117 is a Mg(2+) binding site. Glutamate 180 functions as the Proton acceptor in the catalytic mechanism.

This sequence belongs to the PanB family. As to quaternary structure, homodecamer; pentamer of dimers. Mg(2+) serves as cofactor.

The protein resides in the cytoplasm. It catalyses the reaction 3-methyl-2-oxobutanoate + (6R)-5,10-methylene-5,6,7,8-tetrahydrofolate + H2O = 2-dehydropantoate + (6S)-5,6,7,8-tetrahydrofolate. Its pathway is cofactor biosynthesis; (R)-pantothenate biosynthesis; (R)-pantoate from 3-methyl-2-oxobutanoate: step 1/2. In terms of biological role, catalyzes the reversible reaction in which hydroxymethyl group from 5,10-methylenetetrahydrofolate is transferred onto alpha-ketoisovalerate to form ketopantoate. This is 3-methyl-2-oxobutanoate hydroxymethyltransferase from Corynebacterium diphtheriae (strain ATCC 700971 / NCTC 13129 / Biotype gravis).